Reading from the N-terminus, the 117-residue chain is Acidic phospholipase A2 (117 aa).

7 disulfides stabilise this stretch: cysteine 11–cysteine 70, cysteine 25–cysteine 116, cysteine 27–cysteine 43, cysteine 42–cysteine 98, cysteine 49–cysteine 91, cysteine 59–cysteine 84, and cysteine 77–cysteine 89. The Ca(2+) site is built by tyrosine 26, glycine 28, and glycine 30. Residue histidine 46 is part of the active site. Aspartate 47 lines the Ca(2+) pocket. Asparagine 80 is a glycosylation site (N-linked (GlcNAc...) asparagine). Aspartate 92 is a catalytic residue.

Requires Ca(2+) as cofactor. As to expression, expressed by the venom gland.

Its subcellular location is the secreted. The enzyme catalyses a 1,2-diacyl-sn-glycero-3-phosphocholine + H2O = a 1-acyl-sn-glycero-3-phosphocholine + a fatty acid + H(+). Functionally, snake venom phospholipase A2 (PLA2) that shows strong myotoxicity and induces edema in mice. Shows no cytotoxicity in vitro. Has a strong anticoagulant effect in vitro. PLA2 catalyzes the calcium-dependent hydrolysis of the 2-acyl groups in 3-sn-phosphoglycerides. The polypeptide is Acidic phospholipase A2 (Micrurus dumerilii (Coral snake)).